A 334-amino-acid polypeptide reads, in one-letter code: Large ribosomal subunit protein uL3 (334 aa).

Residues 1-10 (MGMKKSRPRR) show a composition bias toward basic residues. The segment at 1-20 (MGMKKSRPRRGSLAFSPRKR) is disordered.

This sequence belongs to the universal ribosomal protein uL3 family. As to quaternary structure, part of the 50S ribosomal subunit. Forms a cluster with proteins L14 and L24e.

Its function is as follows. One of the primary rRNA binding proteins, it binds directly near the 3'-end of the 23S rRNA, where it nucleates assembly of the 50S subunit. This chain is Large ribosomal subunit protein uL3, found in Methanococcus maripaludis (strain C7 / ATCC BAA-1331).